The chain runs to 144 residues: Large ribosomal subunit protein uL13 (144 aa).

This sequence belongs to the universal ribosomal protein uL13 family. As to quaternary structure, part of the 50S ribosomal subunit.

This protein is one of the early assembly proteins of the 50S ribosomal subunit, although it is not seen to bind rRNA by itself. It is important during the early stages of 50S assembly. This chain is Large ribosomal subunit protein uL13, found in Chloroflexus aurantiacus (strain ATCC 29366 / DSM 635 / J-10-fl).